A 310-amino-acid chain; its full sequence is Mitochondrial citrate transporter E (310 aa).

3 Solcar repeats span residues 2–95, 107–199, and 208–293; these read STTT…LRQG, QSLG…AKRR, and DGPG…TNKI. Transmembrane regions (helical) follow at residues 8–28, 72–92, 114–133, 178–198, 211–228, and 265–286; these read FIAGGVAACGAVTVTHSFETV, GSAYIYQVLLNGCRLGFYEPL, LAGAASGIIGAAAGSPFFLV, AMVRTGFGSSVQLPTYFFAKR, GLHLASSTASGFVVCCVM, and IYKGYFAHLARILPHTILTLSL.

Belongs to the mitochondrial carrier (TC 2.A.29) family.

It is found in the mitochondrion inner membrane. Its function is as follows. Mitochondrial transporter that does not mediate citrate export from mitochondria to cytoplasm. Its exact function has still to be determined. The protein is Mitochondrial citrate transporter E of Aspergillus niger (strain ATCC 1015 / CBS 113.46 / FGSC A1144 / LSHB Ac4 / NCTC 3858a / NRRL 328 / USDA 3528.7).